Here is a 257-residue protein sequence, read N- to C-terminus: Thiazole synthase (257 aa).

The Schiff-base intermediate with DXP role is filled by K96. 1-deoxy-D-xylulose 5-phosphate-binding positions include G157, 184-185 (AG), and 206-207 (NT).

It belongs to the ThiG family. Homotetramer. Forms heterodimers with either ThiH or ThiS.

It localises to the cytoplasm. The catalysed reaction is [ThiS sulfur-carrier protein]-C-terminal-Gly-aminoethanethioate + 2-iminoacetate + 1-deoxy-D-xylulose 5-phosphate = [ThiS sulfur-carrier protein]-C-terminal Gly-Gly + 2-[(2R,5Z)-2-carboxy-4-methylthiazol-5(2H)-ylidene]ethyl phosphate + 2 H2O + H(+). It participates in cofactor biosynthesis; thiamine diphosphate biosynthesis. In terms of biological role, catalyzes the rearrangement of 1-deoxy-D-xylulose 5-phosphate (DXP) to produce the thiazole phosphate moiety of thiamine. Sulfur is provided by the thiocarboxylate moiety of the carrier protein ThiS. In vitro, sulfur can be provided by H(2)S. The protein is Thiazole synthase of Rhizobium meliloti (strain 1021) (Ensifer meliloti).